The primary structure comprises 642 residues: Bifunctional protein glk (642 aa).

The tract at residues 1-340 is glucokinase; it reads MSTGAQSKAV…QLSNRSGGAS (340 aa). 23 to 28 is a binding site for ATP; sequence ADVGGT. The 77-residue stretch at 341-417 folds into the HTH rpiR-type domain; it reads SAVFERIRQM…LKLATGLTGT (77 aa). The tract at residues 341–642 is putative HTH-type transcriptional regulator; the sequence is SAVFERIRQM…SPAAKDVARD (302 aa). Residues 377–396 constitute a DNA-binding region (H-T-H motif); the sequence is IVDIARKADVSQPTVIRFCR. One can recognise an SIS domain in the interval 461–600; sequence AIEILNGARR…AVGVAIRRAS (140 aa). A helical transmembrane segment spans residues 576–596; the sequence is SMISRILHLLMIDILAVGVAI.

It in the N-terminal section; belongs to the bacterial glucokinase family.

The protein localises to the membrane. The catalysed reaction is D-glucose + ATP = D-glucose 6-phosphate + ADP + H(+). The chain is Bifunctional protein glk (glk) from Burkholderia orbicola (strain AU 1054).